Here is a 177-residue protein sequence, read N- to C-terminus: Peptide methionine sulfoxide reductase MsrA (177 aa).

Cys11 is an active-site residue.

The protein belongs to the MsrA Met sulfoxide reductase family.

The enzyme catalyses L-methionyl-[protein] + [thioredoxin]-disulfide + H2O = L-methionyl-(S)-S-oxide-[protein] + [thioredoxin]-dithiol. The catalysed reaction is [thioredoxin]-disulfide + L-methionine + H2O = L-methionine (S)-S-oxide + [thioredoxin]-dithiol. Functionally, has an important function as a repair enzyme for proteins that have been inactivated by oxidation. Catalyzes the reversible oxidation-reduction of methionine sulfoxide in proteins to methionine. The sequence is that of Peptide methionine sulfoxide reductase MsrA from Trichodesmium erythraeum (strain IMS101).